Consider the following 444-residue polypeptide: 3-phosphoshikimate 1-carboxyvinyltransferase (444 aa).

3-phosphoshikimate is bound by residues Lys-32, Ser-33, and Arg-37. Phosphoenolpyruvate is bound at residue Lys-32. Positions 105 and 133 each coordinate phosphoenolpyruvate. Residues Ser-178, Gln-180, Asp-326, and Lys-353 each contribute to the 3-phosphoshikimate site. Residue Gln-180 participates in phosphoenolpyruvate binding. Asp-326 acts as the Proton acceptor in catalysis. 2 residues coordinate phosphoenolpyruvate: Arg-357 and Arg-398.

It belongs to the EPSP synthase family. Monomer.

It localises to the cytoplasm. The enzyme catalyses 3-phosphoshikimate + phosphoenolpyruvate = 5-O-(1-carboxyvinyl)-3-phosphoshikimate + phosphate. The protein operates within metabolic intermediate biosynthesis; chorismate biosynthesis; chorismate from D-erythrose 4-phosphate and phosphoenolpyruvate: step 6/7. Functionally, catalyzes the transfer of the enolpyruvyl moiety of phosphoenolpyruvate (PEP) to the 5-hydroxyl of shikimate-3-phosphate (S3P) to produce enolpyruvyl shikimate-3-phosphate and inorganic phosphate. The polypeptide is 3-phosphoshikimate 1-carboxyvinyltransferase (Nitrosococcus oceani (strain ATCC 19707 / BCRC 17464 / JCM 30415 / NCIMB 11848 / C-107)).